Reading from the N-terminus, the 138-residue chain is Ribulose bisphosphate carboxylase small subunit (138 aa).

This sequence belongs to the RuBisCO small chain family. In terms of assembly, heterohexadecamer of 8 large and 8 small subunits.

It is found in the plastid. The protein localises to the chloroplast. Its function is as follows. RuBisCO catalyzes two reactions: the carboxylation of D-ribulose 1,5-bisphosphate, the primary event in carbon dioxide fixation, as well as the oxidative fragmentation of the pentose substrate in the photorespiration process. Both reactions occur simultaneously and in competition at the same active site. Although the small subunit is not catalytic it is essential for maximal activity. The polypeptide is Ribulose bisphosphate carboxylase small subunit (Porphyridium aerugineum (Red microalga)).